Consider the following 825-residue polypeptide: BEN domain-containing protein 3 (825 aa).

A compositionally biased stretch (acidic residues) spans 1 to 11; it reads MNSTEISEDVE. A disordered region spans residues 1–35; the sequence is MNSTEISEDVEEVLKNNPVKAEGSDATLDCSRNSR. A Glycyl lysine isopeptide (Lys-Gly) (interchain with G-Cter in SUMO); alternate cross-link involves residue K20. A Glycyl lysine isopeptide (Lys-Gly) (interchain with G-Cter in SUMO1); alternate cross-link involves residue K20. Residue K20 forms a Glycyl lysine isopeptide (Lys-Gly) (interchain with G-Cter in SUMO2); alternate linkage. Glycyl lysine isopeptide (Lys-Gly) (interchain with G-Cter in SUMO2) cross-links involve residues K39, K54, K56, K71, K126, K127, K135, K140, K156, and K174. Residues 52–122 are disordered; that stretch reads SSKRKQLDSD…EEEPSTEATV (71 aa). The Nuclear localization signal signature appears at 54–56; the sequence is KRK. In terms of domain architecture, BEN 1 spans 239 to 340; that stretch reads PPPEYQLTAS…DFFSRFWAQR (102 aa). S376 is modified (phosphoserine). A BEN 2 domain is found at 384–484; that stretch reads ASDHVVDTQD…DELEGLGLEG (101 aa). Residue K424 forms a Glycyl lysine isopeptide (Lys-Gly) (interchain with G-Cter in SUMO2) linkage. S486 is modified (phosphoserine). A Glycyl lysine isopeptide (Lys-Gly) (interchain with G-Cter in SUMO); alternate cross-link involves residue K509. K509 is covalently cross-linked (Glycyl lysine isopeptide (Lys-Gly) (interchain with G-Cter in SUMO2); alternate). K525 participates in a covalent cross-link: Glycyl lysine isopeptide (Lys-Gly) (interchain with G-Cter in SUMO2). Residues 547-647 enclose the BEN 3 domain; the sequence is GSDCLLSKEQ…ERCRRRDTEQ (101 aa). K697 participates in a covalent cross-link: Glycyl lysine isopeptide (Lys-Gly) (interchain with G-Cter in SUMO2). Positions 712–813 constitute a BEN 4 domain; sequence VPSPYLLSDK…ERCRRPNRKK (102 aa).

Homooligomer, probably a homooctamer. Interacts with HDAC2 and HDAC3, but not HDAC1. Interacts with SALL4. Interacts with SMARCA5/SNF2H, BAZ2A/TIP5 and USP21. Interacts with the nucleosome remodeling and histone deacetylase (NuRD) repressor complex. Interacts (via BEN domains 1 and 3) with ERCC6L (via N-terminal TPR repeat); the interaction is direct. Post-translationally, sumoylated at Lys-20 by SUMO1 and at Lys-509 by SUMO1, SUMO2 and SUMO3. Sumoylation probably occurs sequentially, with that of Lys-20 preceding that of Lys-509. It does not alter association with heterochromatin, but is required for the repression of transcription.

The protein localises to the nucleus. It is found in the nucleolus. Its function is as follows. Transcriptional repressor which associates with the NoRC (nucleolar remodeling complex) complex and plays a key role in repressing rDNA transcription. The sumoylated form modulates the stability of the NoRC complex component BAZ2A/TIP5 by controlling its USP21-mediated deubiquitination. Binds to unmethylated major satellite DNA and is involved in the recruitment of the Polycomb repressive complex 2 (PRC2) to major satellites. Stimulates the ERCC6L translocase and ATPase activities. The protein is BEN domain-containing protein 3 (Bend3) of Mus musculus (Mouse).